Here is a 179-residue protein sequence, read N- to C-terminus: Centromere protein R (179 aa).

Positions 1–79 (MSAKRSLKLD…RLSRRGQPQT (79 aa)) are disordered. The span at 30 to 50 (NSYSPTTGTCQISPFSSPTSH) shows a compositional bias: polar residues. Basic and acidic residues predominate over residues 51 to 64 (NAEDLRNGLSHGDE). Residues 172-176 (LQLLL) carry the LXXLL motif motif.

Its subcellular location is the nucleus. The protein localises to the chromosome. It is found in the centromere. The protein resides in the kinetochore. Its function is as follows. Transcription coregulator that can have both coactivator and corepressor functions. Involved in the coactivation of nuclear receptors for retinoid X (RXRs) and thyroid hormone (TRs) in a ligand-dependent fashion. Probable component of a centromeric complex involved in assembly of kinetochore proteins, mitotic progression and chromosome segregation. The chain is Centromere protein R (CENPR) from Gallus gallus (Chicken).